The sequence spans 415 residues: D-serine dehydratase (415 aa).

At K68 the chain carries N6-(pyridoxal phosphate)lysine. The pyridoxal 5'-phosphate site is built by Y204, Y211, T253, G279, and N280. Residues H385 and C387 each coordinate Zn(2+).

The protein belongs to the DSD1 family. Homodimer. Pyridoxal 5'-phosphate serves as cofactor. Zn(2+) is required as a cofactor.

Its subcellular location is the cytoplasm. It localises to the nucleus. The catalysed reaction is D-serine = pyruvate + NH4(+). Its function is as follows. Catalyzes the conversion of D-serine to pyruvate and ammonia. May play a role in D-serine detoxification. The chain is D-serine dehydratase from Schizosaccharomyces pombe (strain 972 / ATCC 24843) (Fission yeast).